The primary structure comprises 507 residues: ATP synthase subunit alpha, chloroplastic (507 aa).

Residue 170-177 (GDRQTGKT) coordinates ATP. Disordered stretches follow at residues 278–325 (PRRP…TQAG), 392–430 (EPEASAQFASDPDKATRNQSARGQRSRELLKQSQPAPLP), and 452–471 (GQVQGSPAQSREYLVTNKPE). A compositionally biased stretch (basic and acidic residues) spans 282-303 (PGREAHPGDVPHLHPRPPERAA). Residues 305-322 (LSSQPGEGSTTASPTVET) are compositionally biased toward polar residues.

It belongs to the ATPase alpha/beta chains family. As to quaternary structure, F-type ATPases have 2 components, CF(1) - the catalytic core - and CF(0) - the membrane proton channel. CF(1) has five subunits: alpha(3), beta(3), gamma(1), delta(1), epsilon(1). CF(0) has four main subunits: a, b, b' and c.

It localises to the plastid. The protein resides in the chloroplast thylakoid membrane. The catalysed reaction is ATP + H2O + 4 H(+)(in) = ADP + phosphate + 5 H(+)(out). Produces ATP from ADP in the presence of a proton gradient across the membrane. The alpha chain is a regulatory subunit. In Selaginella uncinata (Blue spike-moss), this protein is ATP synthase subunit alpha, chloroplastic.